Consider the following 534-residue polypeptide: Serine protease vicPb (534 aa).

The N-terminal stretch at M1–G17 is a signal peptide. N34, N65, and N126 each carry an N-linked (GlcNAc...) asparagine glycan. S174 serves as the catalytic Charge relay system. 5 N-linked (GlcNAc...) asparagine glycosylation sites follow: N297, N335, N352, N415, and N437. D451 serves as the catalytic Charge relay system.

This sequence belongs to the peptidase S28 family.

Its pathway is mycotoxin biosynthesis. Functionally, serine protease, part of the gene cluster that mediates the biosynthesis of the secondary metabolite victorin, the molecular basis for Victoria blight of oats. Within the pathway, vicPa and vicPb are probably involved in the processing of the vicA1 and vicA2 precursors. The pathway starts with the processing of the precursor vicA1 by several endopeptidases including kexin proteases as well as the cluster-specific S28 family peptidases vicPa and vicPb to produce 7 identical copies of the hexapeptide Gly-Leu-Lys-Leu-Ala-Phe. After being excised from the precursor peptide, the core peptides are cyclized and modified post-translationally by enzymes encoded within the gene cluster. The ustYa family oxidase vicYb is required for the formation of the macrocycle in victorin and the copper amine oxidases (CAOs) vicK1 and vicK2 are responsible for converting victorin to the active form by oxidizing the N-terminal glycyl residue in the peptides to glyoxylate. Relaxed substrate specificity of enzymes in the victorin biosynthetic pathway results in a metabolic grid that produces a set of analogs including victorinines B, C, E or HV-toxin M. The polypeptide is Serine protease vicPb (Bipolaris victoriae (strain FI3) (Victoria blight of oats agent)).